The following is a 448-amino-acid chain: Probable glycine dehydrogenase (decarboxylating) subunit 1 (448 aa).

Belongs to the GcvP family. N-terminal subunit subfamily. In terms of assembly, the glycine cleavage system is composed of four proteins: P, T, L and H. In this organism, the P 'protein' is a heterodimer of two subunits.

It catalyses the reaction N(6)-[(R)-lipoyl]-L-lysyl-[glycine-cleavage complex H protein] + glycine + H(+) = N(6)-[(R)-S(8)-aminomethyldihydrolipoyl]-L-lysyl-[glycine-cleavage complex H protein] + CO2. In terms of biological role, the glycine cleavage system catalyzes the degradation of glycine. The P protein binds the alpha-amino group of glycine through its pyridoxal phosphate cofactor; CO(2) is released and the remaining methylamine moiety is then transferred to the lipoamide cofactor of the H protein. The polypeptide is Probable glycine dehydrogenase (decarboxylating) subunit 1 (Caulobacter vibrioides (strain ATCC 19089 / CIP 103742 / CB 15) (Caulobacter crescentus)).